We begin with the raw amino-acid sequence, 77 residues long: Small ribosomal subunit protein bS21 (77 aa).

Belongs to the bacterial ribosomal protein bS21 family.

The chain is Small ribosomal subunit protein bS21 from Bartonella tribocorum (strain CIP 105476 / IBS 506).